A 276-amino-acid chain; its full sequence is Syntaxin-12 (276 aa).

Ser-2 bears the N-acetylserine mark. Over 2-248 the chain is Cytoplasmic; sequence SYGPLDMYRN…RAAYYQKKSR (247 aa). A coiled-coil region spans residues 33–131; it reads IQRISQATAQ…RRVSEKEKES (99 aa). Residues Ser-139, Ser-142, Ser-218, and Ser-225 each carry the phosphoserine modification. Residues 178-240 form the t-SNARE coiled-coil homology domain; the sequence is LELIKERETA…ERATEQLQRA (63 aa). Residues 249–269 traverse the membrane as a helical; Anchor for type IV membrane protein segment; sequence KKMCILVLVLSVIIVILGLII. Over 270-276 the chain is Vesicular; that stretch reads WLVYKTK.

This sequence belongs to the syntaxin family. As to quaternary structure, associates with the BLOC-1 complex. Interacts with BLOC1S6. Interacts with NAPA and SNAP23. Identified in a complex containing STX6, STX12, VAMP4 and VTI1A. Interacts with GRIPAP1. Forms a complex with GRIP1, GRIA2 and NSG1; controls the intracellular fate of AMPAR and the endosomal sorting of the GRIA2 subunit toward recycling and membrane targeting. Interacts with NSG1. Interacts with TPC1. Interacts (via N-terminus) with VPS13B.

The protein localises to the endosome membrane. It localises to the golgi apparatus membrane. It is found in the endomembrane system. Its subcellular location is the early endosome membrane. The protein resides in the recycling endosome membrane. Its function is as follows. SNARE promoting fusion of transport vesicles with target membranes. Together with SNARE STX6, promotes movement of vesicles from endosomes to the cell membrane, and may therefore function in the endocytic recycling pathway. Through complex formation with GRIP1, GRIA2 and NSG1 controls the intracellular fate of AMPAR and the endosomal sorting of the GRIA2 subunit toward recycling and membrane targeting. This is Syntaxin-12 (STX12) from Pongo abelii (Sumatran orangutan).